The chain runs to 303 residues: Cytochrome c oxidase subunit 2 (303 aa).

A signal peptide spans 1–25 (MRHSTTLTGCATGAAGLLAATAAAA). A run of 2 helical transmembrane segments spans residues 60–80 (FILV…LYAV) and 104–124 (WTIV…PVLF). H217, C252, C256, and H260 together coordinate Cu cation.

Belongs to the cytochrome c oxidase subunit 2 family. The cofactor is Cu cation.

Its subcellular location is the cell membrane. The catalysed reaction is 4 Fe(II)-[cytochrome c] + O2 + 8 H(+)(in) = 4 Fe(III)-[cytochrome c] + 2 H2O + 4 H(+)(out). Its function is as follows. Subunits I and II form the functional core of the enzyme complex. Electrons originating in cytochrome c are transferred via heme a and Cu(A) to the binuclear center formed by heme a3 and Cu(B). The sequence is that of Cytochrome c oxidase subunit 2 (ctaC) from Cereibacter sphaeroides (Rhodobacter sphaeroides).